The primary structure comprises 450 residues: Protein tweety homolog 1 (450 aa).

Residues 1-43 (MGAPPGYRPSAWVHLLHQLPRADFQLRPVPSAFAPQEREYQQA) are Extracellular-facing. Residues 44–64 (LLLVAALAGLGLGLSLIFIAV) traverse the membrane as a helical segment. Over 65–88 (YLIRFCCCRPPEPPGAKSPPPGGG) the chain is Cytoplasmic. The chain crosses the membrane as a helical span at residues 89 to 109 (CVTWNCIAALLVGCAGIGVGF). Residues 110 to 214 (YGNSETSDGV…DVSFVEEYRW (105 aa)) lie on the Extracellular side of the membrane. Asn-130 carries an N-linked (GlcNAc...) asparagine glycan. A helical membrane pass occupies residues 215–235 (LAYVLLLLLELLVCLFTLLGL). The Cytoplasmic portion of the chain corresponds to 236-240 (ARQSK). Residues 241–261 (WLVIVMTVMSLLVLVLSWGSM) traverse the membrane as a helical segment. The Extracellular portion of the chain corresponds to 262–390 (GLEAATAVGL…LRGLCEDTLE (129 aa)). 2 disulfides stabilise this stretch: Cys-275/Cys-385 and Cys-303/Cys-370. Asn-284 and Asn-355 each carry an N-linked (GlcNAc...) asparagine glycan. A helical membrane pass occupies residues 391–411 (GLLFLLLFSLLSAGALATVLC). Residues 412 to 450 (SLPRAWALFPPSDDYEDTDDDDPFNPQESKRFVQWQSSI) lie on the Cytoplasmic side of the membrane. The segment at 427-450 (EDTDDDDPFNPQESKRFVQWQSSI) is disordered. The residue at position 440 (Ser-440) is a Phosphoserine.

It belongs to the tweety family. Homotetramer; disulfide-linked. Homodimer. In terms of processing, N-glycosylated. Contains high-mannose, hybrid and complex oligosaccharides.

The protein localises to the cell membrane. The catalysed reaction is chloride(in) = chloride(out). It carries out the reaction L-glutamate(out) = L-glutamate(in). Functionally, calcium-independent, swelling-dependent volume-regulated anion channel (VRAC-swell) which plays a pivotal role in the process of regulatory volume decrease (RVD) in the brain through the efflux of anions like chloride and organic osmolytes like glutamate. The chain is Protein tweety homolog 1 (TTYH1) from Bos taurus (Bovine).